Consider the following 398-residue polypeptide: 1-deoxy-D-xylulose 5-phosphate reductoisomerase (398 aa).

8 residues coordinate NADPH: threonine 10, glycine 11, serine 12, isoleucine 13, glycine 36, lysine 37, asparagine 38, and asparagine 124. Lysine 125 is a 1-deoxy-D-xylulose 5-phosphate binding site. Residue glutamate 126 participates in NADPH binding. Aspartate 150 lines the Mn(2+) pocket. Residues serine 151, glutamate 152, serine 186, and histidine 209 each contribute to the 1-deoxy-D-xylulose 5-phosphate site. Residue glutamate 152 participates in Mn(2+) binding. Residue glycine 215 coordinates NADPH. Residues serine 222, asparagine 227, lysine 228, and glutamate 231 each contribute to the 1-deoxy-D-xylulose 5-phosphate site. Glutamate 231 contacts Mn(2+).

It belongs to the DXR family. Homodimer. It depends on Mg(2+) as a cofactor. Mn(2+) is required as a cofactor.

The enzyme catalyses 2-C-methyl-D-erythritol 4-phosphate + NADP(+) = 1-deoxy-D-xylulose 5-phosphate + NADPH + H(+). The protein operates within isoprenoid biosynthesis; isopentenyl diphosphate biosynthesis via DXP pathway; isopentenyl diphosphate from 1-deoxy-D-xylulose 5-phosphate: step 1/6. Functionally, catalyzes the NADPH-dependent rearrangement and reduction of 1-deoxy-D-xylulose-5-phosphate (DXP) to 2-C-methyl-D-erythritol 4-phosphate (MEP). This is 1-deoxy-D-xylulose 5-phosphate reductoisomerase from Shigella flexneri.